The chain runs to 263 residues: Receptor-transporting protein 1 (263 aa).

The Cytoplasmic segment spans residues 1-238 (MRIFRPWRLR…ETGSGCNFCS (238 aa)). A 3CxxC-type zinc finger spans residues 88 to 197 (ASGRFHCSWC…GEFCEACQEG (110 aa)). A helical transmembrane segment spans residues 239–259 (IPWCLFWATVLMLIIYLQFSF). At 260–263 (RTSV) the chain is on the extracellular side.

It belongs to the TMEM7 family. In terms of assembly, interacts with olfactory receptors. As to expression, predominantly expressed in olfactory and vomeronasal organs, in mature olfactory sensory neurons.

It localises to the cell membrane. Functionally, specifically promotes functional cell surface expression of olfactory receptors, but not of other GPCRs. The sequence is that of Receptor-transporting protein 1 (Rtp1) from Mus musculus (Mouse).